The following is a 315-amino-acid chain: HTH-type transcriptional regulator TreR (315 aa).

The HTH lacI-type domain maps to 5 to 59 (LTIKDIARLSGVGKSTVSRVLNNESGVSERTRERVEAVMNQHGFSPSRSARAMRG). The H-T-H motif DNA-binding region spans 7–26 (IKDIARLSGVGKSTVSRVLN). Residues 71–77 (RLDSLSE), G126, R147, 187–190 (DITT), R194, T242, and Y284 each bind alpha,alpha-trehalose 6-phosphate.

In terms of assembly, homodimer.

Its function is as follows. Repressor of the treBC operon. It is able to bind trehalose-6-phosphate. The protein is HTH-type transcriptional regulator TreR (treR) of Salmonella typhimurium (strain LT2 / SGSC1412 / ATCC 700720).